We begin with the raw amino-acid sequence, 1133 residues long: DNA repair protein rad8 (1133 aa).

2 disordered regions span residues 1-34 (MKRK…SKPN) and 392-413 (PEAR…EEDV). S18 is modified (phosphoserine). One can recognise a Helicase ATP-binding domain in the interval 516 to 705 (PNSMPYHRGG…YSLIKFMRYE (190 aa)). 529 to 536 (DEMGLGKT) provides a ligand contact to ATP. Positions 656-659 (DEGH) match the DEGH box motif. The RING-type zinc finger occupies 877 to 923 (CPICCNEPIQNPLLLNCKHACCGDCLSEHIQYQKRRNIIPPLCHTCR). Residues 971–1125 (QLRQLTHSSE…EGKQQVQSIE (155 aa)) form the Helicase C-terminal domain.

It belongs to the SNF2/RAD54 helicase family.

Its subcellular location is the cytoplasm. The protein localises to the nucleus. Probable helicase, member of the UBC2/RAD6 epistasis group. Functions with DNA repair protein rad18 in error-free postreplication DNA repair. Involved in the maintenance of wild-type rates of instability of simple repetitive sequences such as poly(GT) repeats. Plays a role in surviving topoisomerase-mediated DNA damage. This is DNA repair protein rad8 from Schizosaccharomyces pombe (strain 972 / ATCC 24843) (Fission yeast).